Consider the following 141-residue polypeptide: Large ribosomal subunit protein uL11 (141 aa).

It belongs to the universal ribosomal protein uL11 family. In terms of assembly, part of the ribosomal stalk of the 50S ribosomal subunit. Interacts with L10 and the large rRNA to form the base of the stalk. L10 forms an elongated spine to which L12 dimers bind in a sequential fashion forming a multimeric L10(L12)X complex. One or more lysine residues are methylated.

Functionally, forms part of the ribosomal stalk which helps the ribosome interact with GTP-bound translation factors. This Geobacillus kaustophilus (strain HTA426) protein is Large ribosomal subunit protein uL11.